The primary structure comprises 479 residues: MGTPGTSAGALFLSSASAPSRKRAAGEAGEAGVARSRQRVLDEEEYIEGLQTVIQRDFFPDVEKLQAQKEYLEAEENGDLERMRQIAIKFGSALGKISREPPPPYVTPATFETPEVHPGSAVLGNKPRPQGRDLDDGEAGEEEEKEPLPSLDVFLSQYTSEDNASFQEIMEVAKEKSHARHAWLYQAEEEFEKRQKDNLELPSAEHQAIESSQAGVETWKYKAKNSLMYYPEGVPDEEQLFKKPRQIVHKNTRFLRDPFSQALSRSQLQQAAALNAQHKQGKVGPDGKELIPQESPRVGGFGFVATPSPAPGVNESPLMTWGEVENTPLRVEGSESPYVDRTPGPTFKILEPGRRERLGLKMANEAAAKNRAKKQEALRRVTENLASLTPKGLSPAMSPALQRLVSRTASKYTDRALRASYTPSPARSSHLKTPAGGPQTPTSTPAPGSATRTPLTQDPASITDNLLQLPARRKASDFF.

Methionine 1 bears the N-acetylmethionine mark. Disordered stretches follow at residues 1 to 38 (MGTP…RSRQ) and 95 to 152 (GKIS…PSLD). Threonine 3 carries the post-translational modification Phosphothreonine. Over residues 7-19 (SAGALFLSSASAP) the composition is skewed to low complexity. Residues 135–145 (DDGEAGEEEEK) are compositionally biased toward acidic residues. Lysine 145 is covalently cross-linked (Glycyl lysine isopeptide (Lys-Gly) (interchain with G-Cter in SUMO2)). Phosphoserine is present on serine 295. At threonine 389 the chain carries Phosphothreonine. A phosphoserine mark is found at serine 394 and serine 398. The segment at 415 to 479 (RALRASYTPS…PARRKASDFF (65 aa)) is disordered. Positions 433–454 (TPAGGPQTPTSTPAPGSATRTP) are enriched in low complexity. Over residues 455–466 (LTQDPASITDNL) the composition is skewed to polar residues.

This sequence belongs to the ESS2 family. Identified in the spliceosome C complex. Interacts with FRA10AC1. As to expression, in the adult, widely expressed with highest expression in the testis and brain. Also widely expressed in the embryo with highest levels in the anterior pons.

Its subcellular location is the nucleus. In terms of biological role, may be involved in pre-mRNA splicing. In Mus musculus (Mouse), this protein is Splicing factor ESS-2 homolog (Ess2).